We begin with the raw amino-acid sequence, 186 residues long: High mobility group protein B4 (186 aa).

DNA-binding regions (HMG box) lie at residues Pro-9–Val-79 and Pro-93–Arg-161. A disordered region spans residues Asn-77–Ser-98.

The protein belongs to the HMGB family.

Its subcellular location is the nucleus. It localises to the chromosome. This chain is High mobility group protein B4 (HMGB4), found in Homo sapiens (Human).